The following is a 343-amino-acid chain: Phospholipid phosphatase-related protein type 2 (343 aa).

Helical transmembrane passes span 12–32 (FSIIPCFVFVESVLLGIVVLL), 72–92 (ALIYALVTAGPTLTILLGELA), and 129–149 (FLGVYSFGLFTTTIFANAGQV). Asn-165 carries an N-linked (GlcNAc...) asparagine glycan. The next 3 membrane-spanning stretches (helical) occupy residues 210-230 (AALCAYAVTYTAMYVTLVFRV), 239-259 (SLCLALLCPAFLVGVVRVAEY), and 266-286 (VLAGFLTGAAIATFLVTCVVH). The disordered stretch occupies residues 291-343 (RPHSGRRLSPWEDLSQAPTMDSPLEKNPRPAGRIRHRHGSPHPSRRTVPAVAT). A phosphoserine mark is found at Ser-299 and Ser-312. Basic residues predominate over residues 322 to 335 (GRIRHRHGSPHPSR).

The protein belongs to the PA-phosphatase related phosphoesterase family.

The protein localises to the membrane. This Mus musculus (Mouse) protein is Phospholipid phosphatase-related protein type 2.